A 781-amino-acid chain; its full sequence is Potassium transporter 5 (781 aa).

Polar residues predominate over residues M1–G11. The segment at M1–E24 is disordered. The Cytoplasmic segment spans residues M1–H63. The chain crosses the membrane as a helical span at residues L64 to F84. The Extracellular portion of the chain corresponds to S85 to G100. Residues V101–V121 form a helical membrane-spanning segment. Topologically, residues L122–K187 are cytoplasmic. A helical transmembrane segment spans residues I188–T208. Residues P209 to K225 are Extracellular-facing. Residues S226–V246 traverse the membrane as a helical segment. Residues Q247 to S257 are Cytoplasmic-facing. Residues F258 to F278 traverse the membrane as a helical segment. Residues K279–G304 are Extracellular-facing. A helical membrane pass occupies residues W305 to L325. Topologically, residues G326–Q334 are cytoplasmic. Residues I335–Y355 traverse the membrane as a helical segment. Topologically, residues L356 to V381 are extracellular. The chain crosses the membrane as a helical span at residues V382–I402. Over A403–Q426 the chain is Cytoplasmic. A helical membrane pass occupies residues V427–F447. Residues Q448–G458 lie on the Extracellular side of the membrane. A helical transmembrane segment spans residues I459–I479. Over W480–K481 the chain is Cytoplasmic. A helical transmembrane segment spans residues T482–L502. Residues S503–G512 lie on the Extracellular side of the membrane. A helical membrane pass occupies residues G513–V533. Topologically, residues H534 to I781 are cytoplasmic. A disordered region spans residues V681 to N707. Over residues D683–Q700 the composition is skewed to polar residues.

The protein belongs to the HAK/KUP transporter (TC 2.A.72.3) family. As to expression, expressed in root epidermis, parenchyma of stele tissue and primordial of the lateral root, root-shoot junctions and leaf sheaths. Expressed in germinated embryonic tissue, young tillers, flower organs and pedicels.

The protein resides in the cell membrane. The catalysed reaction is K(+)(in) = K(+)(out). Its function is as follows. High-affinity potassium transporter. Its potassium transporter activity does not seem to be affected by high sodium and low potassium concentrations in the extracellular environment. Invloved in salt stress tolerance by enhancing root potassium uptake and translocation to the shoot to prevent sodium influx during salt stress. Involved in the positive regulation of disease resistance against the rice grassy stunt virus by promoting potassium transport and increasing endogenous plant potassium. This Oryza sativa subsp. japonica (Rice) protein is Potassium transporter 5 (HAK5).